Consider the following 227-residue polypeptide: Albumin-2 (227 aa).

Hemopexin repeat units follow at residues proline 3–proline 46, serine 61–phenylalanine 111, glutamate 117–phenylalanine 165, and glutamate 171–leucine 221. Residues asparagine 7 and aspartate 65 each contribute to the Ca(2+) site. Residue serine 118 coordinates spermine. Ca(2+) is bound by residues aspartate 121 and aspartate 175.

Monomer and homodimer. Dimers are prevalent in solution.

The protein resides in the cytoplasm. It is found in the cytosol. Its function is as follows. May play a role in response to oxidative stress and polyamine biosynthesis. The monomeric form binds one hemin per monomer. In the dimeric form, about half of the dimers bind one molecule of spermine each under physiological conditions. Ligand binding is mutually exclusive as binding of hemin leads to dissociation of the dimer. The protein is Albumin-2 of Lathyrus sativus (White vetchling).